Reading from the N-terminus, the 104-residue chain is Cytochrome c-551 (104 aa).

The first 22 residues, 1-22 (MKPYALLSLLATGTLLAQGAWA), serve as a signal peptide directing secretion. 4 residues coordinate heme c: Cys-34, Cys-37, His-38, and Met-83.

Binds 1 heme c group covalently per subunit.

The protein localises to the periplasm. In terms of biological role, electron donor for cytochrome cd1 in nitrite and nitrate respiration. This chain is Cytochrome c-551 (nirM), found in Pseudomonas aeruginosa (strain ATCC 15692 / DSM 22644 / CIP 104116 / JCM 14847 / LMG 12228 / 1C / PRS 101 / PAO1).